The following is a 323-amino-acid chain: tRNA dimethylallyltransferase (323 aa).

Position 12–19 (12–19) interacts with ATP; the sequence is GPTASGKT. 14–19 provides a ligand contact to substrate; it reads TASGKT. 2 interaction with substrate tRNA regions span residues 37 to 40 and 161 to 165; these read DSAL and QRLVR.

The protein belongs to the IPP transferase family. As to quaternary structure, monomer. The cofactor is Mg(2+).

It catalyses the reaction adenosine(37) in tRNA + dimethylallyl diphosphate = N(6)-dimethylallyladenosine(37) in tRNA + diphosphate. Functionally, catalyzes the transfer of a dimethylallyl group onto the adenine at position 37 in tRNAs that read codons beginning with uridine, leading to the formation of N6-(dimethylallyl)adenosine (i(6)A). The protein is tRNA dimethylallyltransferase of Azotobacter vinelandii (strain DJ / ATCC BAA-1303).